Here is a 131-residue protein sequence, read N- to C-terminus: Small ribosomal subunit protein uS12 (131 aa).

The residue at position 89 (Asp89) is a 3-methylthioaspartic acid.

Belongs to the universal ribosomal protein uS12 family. As to quaternary structure, part of the 30S ribosomal subunit. Contacts proteins S8 and S17. May interact with IF1 in the 30S initiation complex.

In terms of biological role, with S4 and S5 plays an important role in translational accuracy. Its function is as follows. Interacts with and stabilizes bases of the 16S rRNA that are involved in tRNA selection in the A site and with the mRNA backbone. Located at the interface of the 30S and 50S subunits, it traverses the body of the 30S subunit contacting proteins on the other side and probably holding the rRNA structure together. The combined cluster of proteins S8, S12 and S17 appears to hold together the shoulder and platform of the 30S subunit. This chain is Small ribosomal subunit protein uS12, found in Campylobacter concisus (strain 13826).